The primary structure comprises 97 residues: Protein ParC (97 aa).

This Escherichia coli protein is Protein ParC (parC).